The sequence spans 239 residues: Sugar fermentation stimulation protein homolog (239 aa).

The protein belongs to the SfsA family.

In Synechococcus sp. (strain JA-2-3B'a(2-13)) (Cyanobacteria bacterium Yellowstone B-Prime), this protein is Sugar fermentation stimulation protein homolog.